Here is a 419-residue protein sequence, read N- to C-terminus: Effector protein BipC (419 aa).

2 disordered regions span residues 62–91 and 338–402; these read VAGS…TVSG and LQSG…AKSQ. Basic and acidic residues-rich tracts occupy residues 71–91 and 380–392; these read ELAR…TVSG and TRDE…REAA.

This sequence belongs to the SctB/SipC family.

It is found in the secreted. This chain is Effector protein BipC (bipC), found in Burkholderia pseudomallei (strain 1106a).